Here is a 538-residue protein sequence, read N- to C-terminus: UPF0761 membrane protein PsycPRwf_0630 (538 aa).

6 consecutive transmembrane segments (helical) span residues leucine 43–leucine 63, leucine 100–glutamate 120, tryptophan 143–valine 163, tryptophan 183–isoleucine 203, isoleucine 215–methionine 235, and alanine 247–leucine 267. A disordered region spans residues serine 427–lysine 538. A compositionally biased stretch (low complexity) spans proline 482–lysine 493. The span at lysine 503–lysine 514 shows a compositional bias: basic and acidic residues.

The protein belongs to the UPF0761 family.

It is found in the cell inner membrane. This chain is UPF0761 membrane protein PsycPRwf_0630, found in Psychrobacter sp. (strain PRwf-1).